A 203-amino-acid chain; its full sequence is Recombination protein RecR (203 aa).

The C4-type zinc finger occupies 56-71 (CAVCGNVSDDERCRIC). Positions 79-179 (ALVCVVEEPK…TVTRIASGLP (101 aa)) constitute a Toprim domain.

It belongs to the RecR family.

Functionally, may play a role in DNA repair. It seems to be involved in an RecBC-independent recombinational process of DNA repair. It may act with RecF and RecO. The sequence is that of Recombination protein RecR from Mycobacterium ulcerans (strain Agy99).